Reading from the N-terminus, the 97-residue chain is Putative membrane protein insertion efficiency factor (97 aa).

Belongs to the UPF0161 family.

Its subcellular location is the cell membrane. Its function is as follows. Could be involved in insertion of integral membrane proteins into the membrane. This is Putative membrane protein insertion efficiency factor from Lactobacillus johnsonii (strain CNCM I-12250 / La1 / NCC 533).